The chain runs to 448 residues: Asparagine--tRNA ligase (448 aa).

The protein belongs to the class-II aminoacyl-tRNA synthetase family. In terms of assembly, homodimer.

It localises to the cytoplasm. It catalyses the reaction tRNA(Asn) + L-asparagine + ATP = L-asparaginyl-tRNA(Asn) + AMP + diphosphate + H(+). This is Asparagine--tRNA ligase from Streptococcus sanguinis (strain SK36).